A 276-amino-acid chain; its full sequence is Putative pyruvate, phosphate dikinase regulatory protein (276 aa).

151–158 provides a ligand contact to ADP; it reads GISRTSKT.

The protein belongs to the pyruvate, phosphate/water dikinase regulatory protein family. PDRP subfamily.

The enzyme catalyses N(tele)-phospho-L-histidyl/L-threonyl-[pyruvate, phosphate dikinase] + ADP = N(tele)-phospho-L-histidyl/O-phospho-L-threonyl-[pyruvate, phosphate dikinase] + AMP + H(+). It catalyses the reaction N(tele)-phospho-L-histidyl/O-phospho-L-threonyl-[pyruvate, phosphate dikinase] + phosphate + H(+) = N(tele)-phospho-L-histidyl/L-threonyl-[pyruvate, phosphate dikinase] + diphosphate. Its function is as follows. Bifunctional serine/threonine kinase and phosphorylase involved in the regulation of the pyruvate, phosphate dikinase (PPDK) by catalyzing its phosphorylation/dephosphorylation. This chain is Putative pyruvate, phosphate dikinase regulatory protein, found in Streptococcus agalactiae serotype Ia (strain ATCC 27591 / A909 / CDC SS700).